The following is a 201-amino-acid chain: UPF0637 protein LSEI_1198 (201 aa).

Belongs to the UPF0637 family.

This is UPF0637 protein LSEI_1198 from Lacticaseibacillus paracasei (strain ATCC 334 / BCRC 17002 / CCUG 31169 / CIP 107868 / KCTC 3260 / NRRL B-441) (Lactobacillus paracasei).